Reading from the N-terminus, the 363-residue chain is Phospho-N-acetylmuramoyl-pentapeptide-transferase (363 aa).

The next 11 membrane-spanning stretches (helical) occupy residues 27–47, 76–96, 97–117, 137–157, 171–191, 202–222, 226–246, 248–268, 271–291, 292–312, and 340–360; these read AGAACLTALAISLLLGNPLIA, TMGGVLILAALFGSTLLWADL, TDGYVWAVLLTTLSFGAVGFA, LGCEFAASLVGGYWMQSLMPA, WLLPLGFAFPLFAMITITGFG, GLAIVPVIIAALVFGLISYLV, VFADYLQLHAVPGTGELCVFC, ALVGAGLGFLWFNAPPAAVFM, TGSLSLGGALGAIAVAVKHEL, VLCIVGGLFVVETLSVIIQVF, and KIVIRFWIVSIVLGLCGLATL.

This sequence belongs to the glycosyltransferase 4 family. MraY subfamily. Mg(2+) serves as cofactor.

It localises to the cell inner membrane. The enzyme catalyses UDP-N-acetyl-alpha-D-muramoyl-L-alanyl-gamma-D-glutamyl-meso-2,6-diaminopimeloyl-D-alanyl-D-alanine + di-trans,octa-cis-undecaprenyl phosphate = di-trans,octa-cis-undecaprenyl diphospho-N-acetyl-alpha-D-muramoyl-L-alanyl-D-glutamyl-meso-2,6-diaminopimeloyl-D-alanyl-D-alanine + UMP. It functions in the pathway cell wall biogenesis; peptidoglycan biosynthesis. Its function is as follows. Catalyzes the initial step of the lipid cycle reactions in the biosynthesis of the cell wall peptidoglycan: transfers peptidoglycan precursor phospho-MurNAc-pentapeptide from UDP-MurNAc-pentapeptide onto the lipid carrier undecaprenyl phosphate, yielding undecaprenyl-pyrophosphoryl-MurNAc-pentapeptide, known as lipid I. This is Phospho-N-acetylmuramoyl-pentapeptide-transferase from Gluconacetobacter diazotrophicus (strain ATCC 49037 / DSM 5601 / CCUG 37298 / CIP 103539 / LMG 7603 / PAl5).